Reading from the N-terminus, the 317-residue chain is Transcriptional regulator LsrR (317 aa).

The segment at residues 33-56 (QSEISDRLGLTRLKVSRLLEKGHQ) is a DNA-binding region (H-T-H motif).

It belongs to the SorC transcriptional regulatory family.

It localises to the cytoplasm. Inactivated by phosphorylated autoinducer-2 (phospho-AI-2). Phospho-AI-2 acts by binding to LsrR, which is then unable to bind to the promoter regions, allowing the transcription of the target genes. Functionally, transcriptional regulator that represses the expression of the lsr operon in the absence of the quorum-sensing signaling molecule autoinducer 2 (AI-2). It also represses the expression of the lsrRK operon. Acts by binding directly to the lsrA and lsrR promoter regions. In the presence of phosphorylated autoinducer-2 (phospho-AI-2), LsrR is inactivated, leading to the transcription of the genes. This Escherichia coli O157:H7 protein is Transcriptional regulator LsrR (lsrR).